Reading from the N-terminus, the 113-residue chain is Putative membrane protein insertion efficiency factor (113 aa).

It belongs to the UPF0161 family.

The protein resides in the cell inner membrane. Could be involved in insertion of integral membrane proteins into the membrane. The protein is Putative membrane protein insertion efficiency factor of Campylobacter jejuni subsp. jejuni serotype O:2 (strain ATCC 700819 / NCTC 11168).